Here is a 333-residue protein sequence, read N- to C-terminus: DNA-directed RNA polymerase subunit alpha (333 aa).

Positions 1-227 (MRKIKVAPFM…VMNKQLSVFN (227 aa)) are alpha N-terminal domain (alpha-NTD). Residues 247-333 (ELKPFLAAVD…LVKKLEQLKA (87 aa)) form an alpha C-terminal domain (alpha-CTD) region.

This sequence belongs to the RNA polymerase alpha chain family. As to quaternary structure, homodimer. The RNAP catalytic core consists of 2 alpha, 1 beta, 1 beta' and 1 omega subunit. When a sigma factor is associated with the core the holoenzyme is formed, which can initiate transcription.

The enzyme catalyses RNA(n) + a ribonucleoside 5'-triphosphate = RNA(n+1) + diphosphate. In terms of biological role, DNA-dependent RNA polymerase catalyzes the transcription of DNA into RNA using the four ribonucleoside triphosphates as substrates. This chain is DNA-directed RNA polymerase subunit alpha, found in Sulfurovum sp. (strain NBC37-1).